Reading from the N-terminus, the 183-residue chain is Dual-action ribosomal maturation protein DarP (183 aa).

The disordered stretch occupies residues 1 to 27 (MSSHSQEPVGEENFDDSEYDRPSKSQV). Residues 9-18 (VGEENFDDSE) are compositionally biased toward acidic residues.

This sequence belongs to the DarP family.

The protein localises to the cytoplasm. Its function is as follows. Member of a network of 50S ribosomal subunit biogenesis factors which assembles along the 30S-50S interface, preventing incorrect 23S rRNA structures from forming. Promotes peptidyl transferase center (PTC) maturation. The chain is Dual-action ribosomal maturation protein DarP from Bordetella parapertussis (strain 12822 / ATCC BAA-587 / NCTC 13253).